The chain runs to 393 residues: 4-hydroxyphenylpyruvate dioxygenase (393 aa).

Thr2 carries the post-translational modification N-acetylthreonine. VOC domains are found at residues 18-149 (HFHS…LVEK) and 180-338 (IIDH…IFTK). Lys132 is subject to N6-succinyllysine. His183 is a Fe cation binding site. A phosphoserine mark is found at Ser211, Ser226, and Ser250. Residues His266 and Glu349 each coordinate Fe cation.

The protein belongs to the 4HPPD family. Homodimer. It depends on Fe cation as a cofactor.

It localises to the cytoplasm. It is found in the endoplasmic reticulum membrane. Its subcellular location is the golgi apparatus membrane. It carries out the reaction 3-(4-hydroxyphenyl)pyruvate + O2 = homogentisate + CO2. It functions in the pathway amino-acid degradation; L-phenylalanine degradation; acetoacetate and fumarate from L-phenylalanine: step 3/6. Its function is as follows. Catalyzes the conversion of 4-hydroxyphenylpyruvic acid to homogentisic acid, one of the steps in tyrosine catabolism. This is 4-hydroxyphenylpyruvate dioxygenase (HPD) from Bos taurus (Bovine).